Consider the following 648-residue polypeptide: ABC transporter G family member 14 (648 aa).

The 252-residue stretch at 53 to 304 folds into the ABC transporter domain; the sequence is LKFEEVVYKV…FSSLGFSTSL (252 aa). 99–106 is a binding site for ATP; that stretch reads GPSGSGKT. Asn346 carries N-linked (GlcNAc...) asparagine glycosylation. The region spanning 384 to 590 is the ABC transmembrane type-2 domain; it reads YQFTVLLQRG…CYKLLLGIQY (207 aa). Helical transmembrane passes span 405-425, 435-455, 485-505, 512-532, 543-562, 569-591, and 620-640; these read LRIFQVISVAFLGGLLWWHTP, LLFFFSVFWGFYPLYNAVFTF, LPLELALPTAFVFIIYWMGGL, FILSLLVVLYSVLVAQGLGLA, ATTLASVTTLVFLIAGGYYV, IVWLKYLSYSYYCYKLLLGIQYT, and LWIDVFVMGVMLVGYRLMAYM.

Belongs to the ABC transporter superfamily. ABCG family. Eye pigment precursor importer (TC 3.A.1.204) subfamily. Forms heterodimers with ABCG11. As to expression, accumulates primarily in the pericycle and stelar cells of roots. Expressed in leaves, stems, flowers and siliques, and, at low levels, in roots. Accumulates in the phloem.

It is found in the cell membrane. Its function is as follows. Positive regulator of plant growth which acts as an efflux pump involved in the major root-to-shoot (acropetal) long-distance cytokinin (CK) transport via the xylem sap. Together with ABCG9 and ABCG11, required for vascular development by regulating lipid/sterol homeostasis. Involved in CK-dependent responses to oxidative stress such as hydrogen peroxide H(2)O(2). Functionally, (Microbial infection) Required for SNC1-mediated defense response against the virulent pathogen Pseudomonas syringae pv. tomato DC3000 by promoting the accumulation of trans-zeatin (tZ)-type cytokinins (CK) in the shoot. This Arabidopsis thaliana (Mouse-ear cress) protein is ABC transporter G family member 14.